A 689-amino-acid chain; its full sequence is MGIWKKLTLLLLLLLLVGLGQPPWPAAMALALRWFLGDPTCLVLLGLALLGRPWISSWMPHWLSLVGAALTLFLLPLQPPPGLRWLHKDVAFTFKMLFYGLKFRRRLNKHPPETFVDALERQALAWPDRVALVCTGSEGSSITNSQLDARSCQAAWVLKAKLKDAVIQNTRDAAAILVLPSKTISALSVFLGLAKLGCPVAWINPHSRGMPLLHSVRSSGASVLIVDPDLQENLEEVLPKLLAENIHCFYLGHSSPTPGVEALGASLDAAPSDPVPASLRATIKWKSPAIFIFTSGTTGLPKPAILSHERVIQVSNVLSFCGCRADDVVYDVLPLYHTIGLVLGFLGCLQVGATCVLAPKFSASRFWAECRQHGVTVILYVGEILRYLCNVPEQPEDKIHTVRLAMGNGLRANVWKNFQQRFGPIRIWEFYGSTEGNVGLMNYVGHCGAVGRTSCILRMLTPFELVQFDIETAEPLRDKQGFCIPVEPGKPGLLLTKVRKNQPFLGYRGSQAESNRKLVANVRRVGDLYFNTGDVLTLDQEGFFYFQDRLGDTFRWKGENVSTGEVECVLSSLDFLEEVNVYGVPVPGCEGKVGMAAVKLAPGKTFDGQKLYQHVRSWLPAYATPHFIRIQDSLEITNTYKLVKSRLVREGFDVGIIADPLYILDNKAQTFRSLMPDVYQAVCEGTWNL.

Residues 1 to 29 (MGIWKKLTLLLLLLLLVGLGQPPWPAAMA) are Cytoplasmic-facing. 2 helical membrane-spanning segments follow: residues 30 to 50 (LALR…LALL) and 55 to 75 (ISSW…LFLL). Over 76–689 (PLQPPPGLRW…QAVCEGTWNL (614 aa)) the chain is Cytoplasmic. An AMP-binding site is contributed by 292-303 (IFTSGTTGLPKP).

It belongs to the ATP-dependent AMP-binding enzyme family. As to expression, liver-specific (at protein level). In liver expressed in a periportal distribution.

Its subcellular location is the endoplasmic reticulum membrane. The protein localises to the microsome. It localises to the cell membrane. The enzyme catalyses a fatty acid(in) = a fatty acid(out). It catalyses the reaction cholate + ATP + CoA = choloyl-CoA + AMP + diphosphate. The catalysed reaction is (25R)-3alpha,7alpha,12alpha-trihydroxy-5beta-cholestan-26-oate + ATP + CoA = (25R)-3alpha,7alpha,12alpha-trihydroxy-5beta-cholestan-26-oyl-CoA + AMP + diphosphate. It carries out the reaction chenodeoxycholate + ATP + CoA = chenodeoxycholoyl-CoA + AMP + diphosphate. The enzyme catalyses deoxycholate + ATP + CoA = deoxycholoyl-CoA + AMP + diphosphate. It catalyses the reaction lithocholate + ATP + CoA = lithocholoyl-CoA + AMP + diphosphate. The catalysed reaction is a very long-chain fatty acid + ATP + CoA = a very long-chain fatty acyl-CoA + AMP + diphosphate. It carries out the reaction tetracosanoate + ATP + CoA = tetracosanoyl-CoA + AMP + diphosphate. The enzyme catalyses hexacosanoate + ATP + CoA = hexacosanoyl-CoA + AMP + diphosphate. It catalyses the reaction a long-chain fatty acid + ATP + CoA = a long-chain fatty acyl-CoA + AMP + diphosphate. The catalysed reaction is octadecanoate + ATP + CoA = octadecanoyl-CoA + AMP + diphosphate. It carries out the reaction eicosanoate + ATP + CoA = eicosanoyl-CoA + AMP + diphosphate. Mediates the import of long-chain fatty acids (LCFA) by facilitating their transport across cell membranes. Also catalyzes the ATP-dependent formation of fatty acyl-CoA using LCFA and very-long-chain fatty acids (VLCFA) as substrates. Mainly functions as a bile acyl-CoA synthetase catalyzing the activation of bile acids via ATP-dependent formation of bile acid CoA thioesters which is necessary for their subsequent conjugation with glycine or taurine. Both primary bile acids (cholic acid and chenodeoxycholic acid) and secondary bile acids (deoxycholic acid and lithocholic acid) are the principal substrates. In vitro, activates 3-alpha,7-alpha,12-alpha-trihydroxy-5-beta-cholestanate ((25R)-3alpha,7alpha,12alpha-trihydroxy-5beta-cholestan-26-oate or THCA), the C27 precursor of cholic acid deriving from the de novo synthesis from cholesterol. Plays an important role in hepatic fatty acid uptake and bile acid reconjugation and recycling but not in de novo synthesis of bile acids. This chain is Long-chain fatty acid transport protein 5 (Slc27a5), found in Mus musculus (Mouse).